The primary structure comprises 95 residues: Co-chaperonin GroES (95 aa).

This sequence belongs to the GroES chaperonin family. As to quaternary structure, heptamer of 7 subunits arranged in a ring. Interacts with the chaperonin GroEL.

The protein resides in the cytoplasm. Functionally, together with the chaperonin GroEL, plays an essential role in assisting protein folding. The GroEL-GroES system forms a nano-cage that allows encapsulation of the non-native substrate proteins and provides a physical environment optimized to promote and accelerate protein folding. GroES binds to the apical surface of the GroEL ring, thereby capping the opening of the GroEL channel. The polypeptide is Co-chaperonin GroES (Xylella fastidiosa (strain M12)).